The primary structure comprises 304 residues: Olfactory receptor 4K13 (304 aa).

Topologically, residues 1-25 are extracellular; that stretch reads MERANHSVVSEFILLGLSKSQNLQI. An N-linked (GlcNAc...) asparagine glycan is attached at asparagine 5. Residues 26-49 traverse the membrane as a helical segment; sequence LFFLGFSVVFVGIVLGNLLILVTV. The Cytoplasmic portion of the chain corresponds to 50–57; the sequence is TFDSLLHT. The chain crosses the membrane as a helical span at residues 58-79; the sequence is PMYFLLSNLSCIDMILASFATP. The Extracellular segment spans residues 80–100; the sequence is KMIVDFLRERKTISWWGCYSQ. A disulfide bond links cysteine 97 and cysteine 189. The chain crosses the membrane as a helical span at residues 101 to 120; it reads MFFMHLLGGSEMMLLVAMAI. Residues 121–139 lie on the Cytoplasmic side of the membrane; it reads DRYVAICKPLHYMTIMSPR. The chain crosses the membrane as a helical span at residues 140-158; the sequence is VLTGLLLSSYAVGFVHSSS. Residues 159–195 are Extracellular-facing; that stretch reads QMAFMLTLPFCGPNVIDSFFCDLPLVIKLACKDTYIL. The helical transmembrane segment at 196 to 219 threads the bilayer; the sequence is QLLVIADSGLLSLVCFLLLLVSYG. Residues 220 to 235 are Cytoplasmic-facing; sequence VIIFSVRYRAASRSSK. Residues 236–258 traverse the membrane as a helical segment; the sequence is AFSTLSAHITVVTLFFAPCVFIY. Residues 259–269 are Extracellular-facing; the sequence is VWPFSRYSVDK. Residues 270-289 traverse the membrane as a helical segment; sequence ILSVFYTIFTPLLNPIIYTL. Residues 290-304 are Cytoplasmic-facing; that stretch reads RNQEVKAAIKKRLCI.

Belongs to the G-protein coupled receptor 1 family.

It is found in the cell membrane. Its function is as follows. Odorant receptor. This is Olfactory receptor 4K13 (OR4K13) from Homo sapiens (Human).